Reading from the N-terminus, the 792-residue chain is Phosphatidylinositol 4-phosphate 5-kinase type-1 sktl (792 aa).

Basic and acidic residues predominate over residues 1–21 (MDTRVELELEPVGKQDRLKDQ). 5 disordered regions span residues 1-74 (MDTR…QPGT), 105-139 (TQTPASKLRSASSTLDASISRNPSTTGGKHEKKLG), 423-446 (AKLQRKESAAQGPPSLNPDDDAPE), 577-612 (TPTFPLKHSPSKRKTSTTQLRSPASRLPPLSTPTNA), and 640-714 (AAST…TDLS). Composition is skewed to polar residues over residues 52–62 (QTASPDQEATP) and 105–131 (TQTPASKLRSASSTLDASISRNPSTTG). In terms of domain architecture, PIPK spans 155 to 573 (QSKQIMGSIQ…RFQDAMGKQV (419 aa)). A compositionally biased stretch (low complexity) spans 642-658 (STSSLQQQRSSNQSNNN). Positions 678–702 (EPSSTYHTQYSYDSSGRTGSALTSD) are enriched in polar residues.

As to quaternary structure, interacts with ash2 (via B30.2/SPRY domain); the interaction is direct and seems to be specific for ash2 isoform B.

It is found in the cytoplasm. The protein resides in the cell cortex. Its subcellular location is the nucleus. It localises to the chromosome. The protein localises to the apical cell membrane. It is found in the cell projection. The protein resides in the cilium. Its subcellular location is the flagellum membrane. It carries out the reaction a 1,2-diacyl-sn-glycero-3-phospho-(1D-myo-inositol 4-phosphate) + ATP = a 1,2-diacyl-sn-glycero-3-phospho-(1D-myo-inositol-4,5-bisphosphate) + ADP + H(+). In terms of biological role, catalyzes the phosphorylation of phosphatidylinositol 4-phosphate (PtdIns[4]P) to form phosphatidylinositol 4,5-bisphosphate (PtdIns[4,5]P(2)), a lipid second messenger that regulates several cellular processes such as signal transduction, vesicle trafficking, actin cytoskeleton dynamics, cell adhesion, and cell motility. PtdIns[4,5]P(2) can directly act as a second messenger or can be utilized as a precursor to generate other second messengers: inositol 1,4,5-trisphosphate (IP3), diacylglycerol (DAG) or phosphatidylinositol-3,4,5-trisphosphate (PtdIns[3,4,5]P(3)). Required for germline development during oogenesis. Sktl is the major phosphatidylinositol 4-phosphate 5-kinase responsible for enrichment of PtdIns[4,5]P(2) in the apical plasma membrane of the oocyte and follicular epithelium cells of the egg chamber during oogenesis. Involved in nuclear anchoring and microtubule organization required for targeted mRNA transport during maintenance of oocyte polarity. The PtdIns[4,5]P(2) produced by sktl is required for maintenance of cellular polarity, prevention of the epithelial-mesenchymal transition process, maintenance of adherens junctions and regulation of apical constriction, probably by affecting polarized cortical recruitment of PAR proteins and their effectors, including baz/bazooka, aPKC, par-1 and l(2)gl. Involved in actin cytoskeleton organization probably through PtdIns[4,5]P(2)-mediated regulation of Moe/Moesin phosphorylation. Involved in PtdIns[4,5]P(2)-mediated apical recruitment of the formin dia/diaphanous in tubular epithelial cells. Involved in anterodorsal cell morphogenesis and eggshell dorsal appendage formation, probably through regulation of apical constriction by PtdIns[4,5]P(2) during tubulogenesis. Required for cell viability or proliferation during wing and eye imaginal disk development. May be involved in cytoskeletal regulation during sensory bristle development. Together with mys/integrin beta localizes to the trailing edge of larval epidermal cells in a JNK signaling-dependent manner during wound healing and is required for setting up cell polarity and re-epithelialization. Required for polarization of elongating spermatid cysts possibly by generation of PtdIns[4,5]P(2) involved in mediating membrane association and orientation of the nucleus-basal body pair. Probably involved in PtdIns[4,5]P(2)-mediated recruitment of exocyst proteins that may mediate membrane addition during spermatid elongation. Involved in maintenance of specialised cell contacts known as slit diaphragms required for nephrocyte morphogenesis and function. Regulates nephrocyte endocytosis, possibly through PtdIns[4,5]P(2)-mediated recruitment of effector proteins. Not required for nervous system development or neurotransmitter release at the neuromuscular junction. Together with ash2 probably plays a role in maintenance of transcriptionally active chromatin through down-regulation of histone H1 hyperphosphorylation. The polypeptide is Phosphatidylinositol 4-phosphate 5-kinase type-1 sktl (Drosophila melanogaster (Fruit fly)).